The sequence spans 751 residues: Methionine--tRNA ligase, cytoplasmic (751 aa).

The residue at position 2 (S2) is an N-acetylserine. The interval 36-92 (LKPEVDNDNAAMELRNTKEPFLLFDANAILRYVMDDFEGQTSDKYQFALASLQNLLY) is interaction with ARC1. A 'HIGH' region motif is present at residues 205–215 (PYVNNVPHLGN). Position 411 (K411) interacts with ATP. Positions 525–529 (KFSKS) match the 'KMSKS' region motif.

This sequence belongs to the class-I aminoacyl-tRNA synthetase family. Component of a yeast aminoacyl-tRNA synthase (aaRS) complex formed by methionyl-tRNA synthase MES1, glutamyl-tRNA synthase GUS1 and the tRNA aminoacylation cofactor ARC1 in a stoichiometric complex. Interacts (via N-ter) with ARC1 (via N-ter). Can also form a stable binary complex with ARC1 that is functional in terms of aminoacylation. ARC1 increases the affinity for cognate tRNAs due to the presence of a tRNA binding domain in the middle and C-terminal part of ARC1.

It is found in the cytoplasm. The catalysed reaction is tRNA(Met) + L-methionine + ATP = L-methionyl-tRNA(Met) + AMP + diphosphate. In terms of biological role, catalyzes the attachment of methionine to tRNA(Met) in a two-step reaction: methionine is first activated by ATP to form Met-AMP and then transferred to the acceptor end of tRNA(Met). In Saccharomyces cerevisiae (strain ATCC 204508 / S288c) (Baker's yeast), this protein is Methionine--tRNA ligase, cytoplasmic (MES1).